A 67-amino-acid polypeptide reads, in one-letter code: uncharacterized protein (67 aa).

The N-terminal stretch at 1–28 is a signal peptide; it reads MSHVSVIAARLLVWVGILLCLGVPQLWA. A glycan (N-linked (GlcNAc...) asparagine; by host) is linked at N39.

This is an uncharacterized protein from Invertebrate iridescent virus 3 (IIV-3).